We begin with the raw amino-acid sequence, 326 residues long: Putative HTH-type transcriptional regulatory protein MmarC7_1702 (326 aa).

One can recognise an HTH cro/C1-type domain in the interval 128–183 (LRETREKLKISVGELAEISRVSRKTIYKYEQNEANPSAEVAIKIEEYLDVPLIKGI). The H-T-H motif DNA-binding region spans 139-158 (VGELAEISRVSRKTIYKYEQ).

The sequence is that of Putative HTH-type transcriptional regulatory protein MmarC7_1702 from Methanococcus maripaludis (strain C7 / ATCC BAA-1331).